A 96-amino-acid polypeptide reads, in one-letter code: Large ribosomal subunit protein eL14 (96 aa).

It belongs to the eukaryotic ribosomal protein eL14 family.

The polypeptide is Large ribosomal subunit protein eL14 (Staphylothermus marinus (strain ATCC 43588 / DSM 3639 / JCM 9404 / F1)).